Consider the following 424-residue polypeptide: Serine--tRNA ligase (424 aa).

232–234 (TAE) provides a ligand contact to L-serine. Position 263-265 (263-265 (RQE)) interacts with ATP. Position 286 (Glu286) interacts with L-serine. An ATP-binding site is contributed by 350 to 353 (EIGS). Ser386 is an L-serine binding site.

It belongs to the class-II aminoacyl-tRNA synthetase family. Type-1 seryl-tRNA synthetase subfamily. In terms of assembly, homodimer. The tRNA molecule binds across the dimer.

Its subcellular location is the cytoplasm. The catalysed reaction is tRNA(Ser) + L-serine + ATP = L-seryl-tRNA(Ser) + AMP + diphosphate + H(+). It catalyses the reaction tRNA(Sec) + L-serine + ATP = L-seryl-tRNA(Sec) + AMP + diphosphate + H(+). The protein operates within aminoacyl-tRNA biosynthesis; selenocysteinyl-tRNA(Sec) biosynthesis; L-seryl-tRNA(Sec) from L-serine and tRNA(Sec): step 1/1. In terms of biological role, catalyzes the attachment of serine to tRNA(Ser). Is also able to aminoacylate tRNA(Sec) with serine, to form the misacylated tRNA L-seryl-tRNA(Sec), which will be further converted into selenocysteinyl-tRNA(Sec). In Aster yellows witches'-broom phytoplasma (strain AYWB), this protein is Serine--tRNA ligase.